A 78-amino-acid polypeptide reads, in one-letter code: Large ribosomal subunit protein bL31 (78 aa).

4 residues coordinate Zn(2+): Cys16, Cys18, Cys38, and Cys41.

It belongs to the bacterial ribosomal protein bL31 family. Type A subfamily. Part of the 50S ribosomal subunit. Zn(2+) is required as a cofactor.

In terms of biological role, binds the 23S rRNA. This is Large ribosomal subunit protein bL31 from Parafrankia sp. (strain EAN1pec).